The sequence spans 209 residues: MLVKICGVARPEDVALLDGLVDYIGFIVEPSSPRSVEPRRLGELVRLVRESRPVLVTASLPPAEAVDLAASLGIPVVQHHGSLGDGHFSYAEERGVALAPVAVYRRGADLRAAVSQLLSKPHEYVLVDAEKGSRERYEGGLKIPLQALAEVAHMGKVALAGGITPENAHLVAALRPYMVDVASGVESSPGVKDPGKVKALLRALGRLSG.

The protein belongs to the TrpF family.

It catalyses the reaction N-(5-phospho-beta-D-ribosyl)anthranilate = 1-(2-carboxyphenylamino)-1-deoxy-D-ribulose 5-phosphate. It participates in amino-acid biosynthesis; L-tryptophan biosynthesis; L-tryptophan from chorismate: step 3/5. This Pyrobaculum islandicum (strain DSM 4184 / JCM 9189 / GEO3) protein is N-(5'-phosphoribosyl)anthranilate isomerase.